The sequence spans 87 residues: Phosphoribosyl-ATP pyrophosphatase (87 aa).

The protein belongs to the PRA-PH family.

It is found in the cytoplasm. It carries out the reaction 1-(5-phospho-beta-D-ribosyl)-ATP + H2O = 1-(5-phospho-beta-D-ribosyl)-5'-AMP + diphosphate + H(+). The protein operates within amino-acid biosynthesis; L-histidine biosynthesis; L-histidine from 5-phospho-alpha-D-ribose 1-diphosphate: step 2/9. In Salinibacter ruber (strain DSM 13855 / M31), this protein is Phosphoribosyl-ATP pyrophosphatase.